The sequence spans 304 residues: Dihydroorotate dehydrogenase B (NAD(+)), catalytic subunit (304 aa).

Residues S21 and 45-46 (KA) contribute to the FMN site. Residues K45 and 69–73 (NAIGL) each bind substrate. Residues N99 and N127 each coordinate FMN. N127 contributes to the substrate binding site. C130 serves as the catalytic Nucleophile. Residues K165 and I191 each contribute to the FMN site. Substrate is bound at residue 192 to 193 (NT). FMN-binding positions include G217, 243–244 (GG), and 265–266 (GT).

Belongs to the dihydroorotate dehydrogenase family. Type 1 subfamily. In terms of assembly, heterotetramer of 2 PyrK and 2 PyrD type B subunits. FMN is required as a cofactor.

It is found in the cytoplasm. It carries out the reaction (S)-dihydroorotate + NAD(+) = orotate + NADH + H(+). Its pathway is pyrimidine metabolism; UMP biosynthesis via de novo pathway; orotate from (S)-dihydroorotate (NAD(+) route): step 1/1. In terms of biological role, catalyzes the conversion of dihydroorotate to orotate with NAD(+) as electron acceptor. The chain is Dihydroorotate dehydrogenase B (NAD(+)), catalytic subunit (pyrD) from Listeria monocytogenes serotype 4a (strain HCC23).